Consider the following 450-residue polypeptide: Phosphoglucosamine mutase (450 aa).

S101 functions as the Phosphoserine intermediate in the catalytic mechanism. S101, D241, D243, and D245 together coordinate Mg(2+). S101 is modified (phosphoserine).

This sequence belongs to the phosphohexose mutase family. It depends on Mg(2+) as a cofactor. Activated by phosphorylation.

The enzyme catalyses alpha-D-glucosamine 1-phosphate = D-glucosamine 6-phosphate. Functionally, catalyzes the conversion of glucosamine-6-phosphate to glucosamine-1-phosphate. The polypeptide is Phosphoglucosamine mutase (Ligilactobacillus salivarius (strain UCC118) (Lactobacillus salivarius)).